Reading from the N-terminus, the 299-residue chain is ATP phosphoribosyltransferase (299 aa).

The protein belongs to the ATP phosphoribosyltransferase family. Long subfamily. As to quaternary structure, equilibrium between an active dimeric form, an inactive hexameric form and higher aggregates. Interconversion between the various forms is largely reversible and is influenced by the natural substrates and inhibitors of the enzyme. Mg(2+) is required as a cofactor.

It localises to the cytoplasm. It carries out the reaction 1-(5-phospho-beta-D-ribosyl)-ATP + diphosphate = 5-phospho-alpha-D-ribose 1-diphosphate + ATP. The protein operates within amino-acid biosynthesis; L-histidine biosynthesis; L-histidine from 5-phospho-alpha-D-ribose 1-diphosphate: step 1/9. Its activity is regulated as follows. Feedback inhibited by histidine. Catalyzes the condensation of ATP and 5-phosphoribose 1-diphosphate to form N'-(5'-phosphoribosyl)-ATP (PR-ATP). Has a crucial role in the pathway because the rate of histidine biosynthesis seems to be controlled primarily by regulation of HisG enzymatic activity. This is ATP phosphoribosyltransferase from Blochmanniella pennsylvanica (strain BPEN).